The primary structure comprises 501 residues: 2,3-bisphosphoglycerate-independent phosphoglycerate mutase (501 aa).

Mn(2+) is bound by residues aspartate 12 and serine 62. Serine 62 serves as the catalytic Phosphoserine intermediate. Residues histidine 121, 150–151 (RD), arginine 182, arginine 188, 253–256 (RSDR), and lysine 322 contribute to the substrate site. Mn(2+) is bound by residues aspartate 389, histidine 393, aspartate 430, histidine 431, and histidine 449.

Belongs to the BPG-independent phosphoglycerate mutase family. In terms of assembly, monomer. Mn(2+) serves as cofactor.

It carries out the reaction (2R)-2-phosphoglycerate = (2R)-3-phosphoglycerate. The protein operates within carbohydrate degradation; glycolysis; pyruvate from D-glyceraldehyde 3-phosphate: step 3/5. Its function is as follows. Catalyzes the interconversion of 2-phosphoglycerate and 3-phosphoglycerate. The sequence is that of 2,3-bisphosphoglycerate-independent phosphoglycerate mutase from Ehrlichia ruminantium (strain Welgevonden).